The following is a 612-amino-acid chain: BTB/POZ domain-containing protein 9 (612 aa).

One can recognise a BTB domain in the interval 36–104; sequence GDVTFVVEKK…IYTGRATLTD (69 aa). Residues 142-240 enclose the BACK domain; sequence VCMTFDVASL…SLTELLNVVR (99 aa). Residues 560–612 are disordered; the sequence is QSSQKEENSEESGTGDTSLAGQQLDSHALRAPSGSSLPSSPGSNSRSPNRQHQ. Polar residues predominate over residues 573-584; it reads TGDTSLAGQQLD. The span at 588–612 shows a compositional bias: low complexity; sequence LRAPSGSSLPSSPGSNSRSPNRQHQ.

As to expression, detected in the brain (at protein level). Moderately expressed in all specific brain regions examined. Expressed in the dopaminergic neurons of the substantia nigra and A11 neurons. Highly expressed in kidney and moderately expressed in all other adult and fetal tissues.

The protein is BTB/POZ domain-containing protein 9 (BTBD9) of Homo sapiens (Human).